The primary structure comprises 577 residues: Aspartate--tRNA(Asp/Asn) ligase (577 aa).

Residue E171 participates in L-aspartate binding. Residues 195–198 (QLFK) are aspartate. An L-aspartate-binding site is contributed by R217. ATP is bound by residues 217–219 (RDE) and Q226. H444 lines the L-aspartate pocket. E474 lines the ATP pocket. Residue R481 participates in L-aspartate binding. 526–529 (GFDR) is an ATP binding site.

It belongs to the class-II aminoacyl-tRNA synthetase family. Type 1 subfamily. As to quaternary structure, homodimer.

The protein localises to the cytoplasm. It catalyses the reaction tRNA(Asx) + L-aspartate + ATP = L-aspartyl-tRNA(Asx) + AMP + diphosphate. In terms of biological role, aspartyl-tRNA synthetase with relaxed tRNA specificity since it is able to aspartylate not only its cognate tRNA(Asp) but also tRNA(Asn). Reaction proceeds in two steps: L-aspartate is first activated by ATP to form Asp-AMP and then transferred to the acceptor end of tRNA(Asp/Asn). The polypeptide is Aspartate--tRNA(Asp/Asn) ligase (Helicobacter pylori (strain G27)).